A 313-amino-acid chain; its full sequence is MMQITMENKSSVSEFILMGLTDQPELQLPLFVLFLMNYTATVMGNLTLMNLICLNSNLHTPMYFFLFNLSFIDFCYSMVFTPKMLMSFILEKNTISFGGCMAQLFFFLFFVNSESYVLTAMAYDRYVAICKPLTYKVIMSPKICCLLIFSSYLMGFASAMAHTGCMIRLSFCDSNIINHYMCDIFPLLPLSCSSTYVNELMSSVVVGSAIILCCLIILISYAMILFNIIHMSSGKGWSKALGTCGSHIITVSLFYGSGLLAYVKPSSAKTVGQGKFFSVFYTLLVPMLNPLIYSLRNKDVKLAVKKTWKRITS.

Topologically, residues 1–27 are extracellular; that stretch reads MMQITMENKSSVSEFILMGLTDQPELQ. The N-linked (GlcNAc...) asparagine glycan is linked to Asn8. A helical membrane pass occupies residues 28–48; sequence LPLFVLFLMNYTATVMGNLTL. Over 49–59 the chain is Cytoplasmic; that stretch reads MNLICLNSNLH. Residues 60 to 80 form a helical membrane-spanning segment; sequence TPMYFFLFNLSFIDFCYSMVF. Residues 81–96 lie on the Extracellular side of the membrane; that stretch reads TPKMLMSFILEKNTIS. The helical transmembrane segment at 97 to 117 threads the bilayer; that stretch reads FGGCMAQLFFFLFFVNSESYV. Residues Cys100 and Cys192 are joined by a disulfide bond. Residues 118 to 136 lie on the Cytoplasmic side of the membrane; that stretch reads LTAMAYDRYVAICKPLTYK. The chain crosses the membrane as a helical span at residues 137 to 157; it reads VIMSPKICCLLIFSSYLMGFA. Topologically, residues 158-208 are extracellular; that stretch reads SAMAHTGCMIRLSFCDSNIINHYMCDIFPLLPLSCSSTYVNELMSSVVVGS. The chain crosses the membrane as a helical span at residues 209-229; sequence AIILCCLIILISYAMILFNII. The Cytoplasmic portion of the chain corresponds to 230–239; that stretch reads HMSSGKGWSK. The helical transmembrane segment at 240 to 260 threads the bilayer; the sequence is ALGTCGSHIITVSLFYGSGLL. Topologically, residues 261–274 are extracellular; that stretch reads AYVKPSSAKTVGQG. A helical transmembrane segment spans residues 275–295; the sequence is KFFSVFYTLLVPMLNPLIYSL. The Cytoplasmic portion of the chain corresponds to 296–313; it reads RNKDVKLAVKKTWKRITS.

This sequence belongs to the G-protein coupled receptor 1 family. In terms of tissue distribution, expressed in neurons in the olfactory epithelium.

It is found in the cell membrane. Potential odorant receptor. The chain is Olfactory receptor 8C8 from Mus musculus (Mouse).